The sequence spans 601 residues: Elongation factor 4 (601 aa).

One can recognise a tr-type G domain in the interval 6 to 188 (AHIRNFSIIA…QIVRKVPPPK (183 aa)). GTP is bound by residues 18–23 (DHGKST) and 135–138 (NKVD).

The protein belongs to the TRAFAC class translation factor GTPase superfamily. Classic translation factor GTPase family. LepA subfamily.

It localises to the cell inner membrane. It catalyses the reaction GTP + H2O = GDP + phosphate + H(+). Required for accurate and efficient protein synthesis under certain stress conditions. May act as a fidelity factor of the translation reaction, by catalyzing a one-codon backward translocation of tRNAs on improperly translocated ribosomes. Back-translocation proceeds from a post-translocation (POST) complex to a pre-translocation (PRE) complex, thus giving elongation factor G a second chance to translocate the tRNAs correctly. Binds to ribosomes in a GTP-dependent manner. This is Elongation factor 4 from Anaeromyxobacter sp. (strain Fw109-5).